Here is a 159-residue protein sequence, read N- to C-terminus: Large ribosomal subunit protein uL22 (159 aa).

The disordered stretch occupies residues 129-159 (VEGQQKAKMARQKAVTSVVKAPSKTQGGVQK).

The protein belongs to the universal ribosomal protein uL22 family. In terms of assembly, part of the 50S ribosomal subunit.

Functionally, this protein binds specifically to 23S rRNA; its binding is stimulated by other ribosomal proteins, e.g. L4, L17, and L20. It is important during the early stages of 50S assembly. It makes multiple contacts with different domains of the 23S rRNA in the assembled 50S subunit and ribosome. The globular domain of the protein is located near the polypeptide exit tunnel on the outside of the subunit, while an extended beta-hairpin is found that lines the wall of the exit tunnel in the center of the 70S ribosome. This Mycoplasma pneumoniae (strain ATCC 29342 / M129 / Subtype 1) (Mycoplasmoides pneumoniae) protein is Large ribosomal subunit protein uL22 (rplV).